We begin with the raw amino-acid sequence, 92 residues long: Acylphosphatase (92 aa).

Residues tyrosine 5 to tyrosine 92 form the Acylphosphatase-like domain. Active-site residues include arginine 20 and asparagine 38.

The protein belongs to the acylphosphatase family.

It carries out the reaction an acyl phosphate + H2O = a carboxylate + phosphate + H(+). This is Acylphosphatase (acyP) from Yersinia pseudotuberculosis serotype O:1b (strain IP 31758).